A 488-amino-acid polypeptide reads, in one-letter code: Prostaglandin E2 receptor EP4 subtype (488 aa).

Residues 1–19 (MSTPGVNSSASLSPDRLNS) are Extracellular-facing. N7 is a glycosylation site (N-linked (GlcNAc...) asparagine). A helical membrane pass occupies residues 20–43 (PVTIPAVMFIFGVVGNLVAIVVLC). At 44 to 55 (KSRKEQKETTFY) the chain is on the cytoplasmic side. A helical transmembrane segment spans residues 56–79 (TLVCGLAVTDLLGTLLVSPVTIAT). The Extracellular segment spans residues 80–96 (YMKGQWPGGQPLCEYST). A disulfide bond links C92 and C170. The helical transmembrane segment at 97–115 (FILLFFSLSGLSIICAMSV) threads the bilayer. Over 116-135 (ERYLAINHAYFYSHYVDKRL) the chain is Cytoplasmic. The helical transmembrane segment at 136–160 (AGLTLFAVYASNVLFCALPNMGLGS) threads the bilayer. Residues 161–184 (SRLQYPDTWCFIDWTTNVTAHAAY) lie on the Extracellular side of the membrane. A helical transmembrane segment spans residues 185–211 (SYMYAGFSSFLILATVLCNVLVCGALL). Over 212-267 (RMHRQFMRRTSLGTEQHHAAAAASVASRGHPAASPALPRLSDFRRRRSFRRIAGAE) the chain is Cytoplasmic. A helical membrane pass occupies residues 268 to 295 (IQMVILLIATSLVVLICSIPLVVRVFVN). Topologically, residues 296–312 (QLYQPSLEREVSKNPDL) are extracellular. Residues 313 to 332 (QAIRIASVNPILDPWIYILL) form a helical membrane-spanning segment. Topologically, residues 333 to 488 (RKTVLSKAIE…ETLNLSEKCI (156 aa)) are cytoplasmic. The disordered stretch occupies residues 356–376 (RERSGQHCSDSQRTSSAMSGH). The span at 361-376 (QHCSDSQRTSSAMSGH) shows a compositional bias: polar residues. 4 positions are modified to phosphoserine: S374, S377, S379, and S382. A compositionally biased stretch (polar residues) spans 437–449 (SETSDSSQGQDSE). Residues 437 to 475 (SETSDSSQGQDSESVLLVDEAGGSGRAGPAPKGSSLQVT) are disordered.

Belongs to the G-protein coupled receptor 1 family. Interacts with FEM1A. Phosphorylation mediates agonist-mediated desensitization by promoting cytoplasmic retention. As to expression, high in intestine and in peripheral blood mononuclear cells; low in lung, kidney, thymus, uterus, vasculature and brain. Not found in liver, heart, retina oe skeletal muscle.

The protein localises to the cell membrane. In terms of biological role, receptor for prostaglandin E2 (PGE2). The activity of this receptor is mediated by G(s) proteins that stimulate adenylate cyclase. Has a relaxing effect on smooth muscle. May play an important role in regulating renal hemodynamics, intestinal epithelial transport, adrenal aldosterone secretion, and uterine function. The sequence is that of Prostaglandin E2 receptor EP4 subtype (PTGER4) from Homo sapiens (Human).